The chain runs to 238 residues: Riboflavin-binding protein (238 aa).

The N-terminal stretch at 1–17 (MLRFAITLFAVITSSTC) is a signal peptide. Gln18 carries the post-translational modification Pyrrolidone carboxylic acid. Cystine bridges form between Cys22–Cys49, Cys41–Cys90, Cys50–Cys94, Cys74–Cys155, Cys81–Cys127, Cys116–Cys186, Cys120–Cys169, Cys133–Cys151, and Cys184–Cys219. Asn53 carries N-linked (GlcNAc...) asparagine glycosylation. The N-linked (GlcNAc...) asparagine glycan is linked to Asn164. Ser204, Ser205, Ser208, Ser209, Ser210, Ser212, Ser213, and Ser214 each carry phosphoserine.

This sequence belongs to the folate receptor family. Plasma and yolk RBPS have the same carbohydrate components, whereas egg-white RBP has a different, ovomucoid-type carbohydrate chain. Post-translationally, plasma RBP has the same C-terminal sequence as the egg-white RBP, which suggests that the C-terminal residues are cleaved off upon incorporation into the oocyte. Yolk RBP is synthesized in the liver; egg-white RBP is synthesized in the oviduct.

Required for the transport of riboflavin to the developing oocyte. This chain is Riboflavin-binding protein, found in Gallus gallus (Chicken).